A 143-amino-acid chain; its full sequence is Ribonuclease H (143 aa).

Positions 1–140 constitute an RNase H type-1 domain; sequence MKVEIYTDGA…VDALANLGIE (140 aa). Residues D8, E46, D68, and D132 each coordinate Mg(2+).

This sequence belongs to the RNase H family. As to quaternary structure, monomer. Mg(2+) is required as a cofactor.

The protein resides in the cytoplasm. The catalysed reaction is Endonucleolytic cleavage to 5'-phosphomonoester.. In terms of biological role, endonuclease that specifically degrades the RNA of RNA-DNA hybrids. The chain is Ribonuclease H from Legionella pneumophila (strain Lens).